A 364-amino-acid polypeptide reads, in one-letter code: DNA polymerase IV (364 aa).

The UmuC domain maps to Val-6–Gly-194. Mg(2+)-binding residues include Asp-10 and Asp-111. Glu-112 is a catalytic residue.

The protein belongs to the DNA polymerase type-Y family. In terms of assembly, monomer. Mg(2+) serves as cofactor.

It is found in the cytoplasm. The catalysed reaction is DNA(n) + a 2'-deoxyribonucleoside 5'-triphosphate = DNA(n+1) + diphosphate. Poorly processive, error-prone DNA polymerase involved in untargeted mutagenesis. Copies undamaged DNA at stalled replication forks, which arise in vivo from mismatched or misaligned primer ends. These misaligned primers can be extended by PolIV. Exhibits no 3'-5' exonuclease (proofreading) activity. May be involved in translesional synthesis. This is DNA polymerase IV from Nitrosopumilus maritimus (strain SCM1).